Consider the following 143-residue polypeptide: Small ribosomal subunit protein uS9 (143 aa).

At S2 the chain carries N-acetylserine. The disordered stretch occupies residues 123-143 (MPEPKKFGGKGARSRYQKSYR). A compositionally biased stretch (basic residues) spans 134–143 (ARSRYQKSYR).

This sequence belongs to the universal ribosomal protein uS9 family.

This is Small ribosomal subunit protein uS9 (RPS16) from Maudiozyma exigua (Yeast).